Reading from the N-terminus, the 81-residue chain is Adipogenin (81 aa).

Residues 16-36 traverse the membrane as a helical segment; the sequence is FLASWLCLPVGLLLFLLIVWL.

The protein belongs to the adipogenin family.

The protein resides in the membrane. It localises to the nucleus. In terms of biological role, plays a role in stimulating adipocyte differentiation and development. This Sus scrofa (Pig) protein is Adipogenin.